The following is a 516-amino-acid chain: Methionine--tRNA ligase (516 aa).

The 'HIGH' region signature appears at serine 14 to histidine 24. The short motif at lysine 302–serine 306 is the 'KMSKS' region element. Lysine 305 lines the ATP pocket.

The protein belongs to the class-I aminoacyl-tRNA synthetase family. MetG type 2B subfamily. As to quaternary structure, monomer.

The protein resides in the cytoplasm. The enzyme catalyses tRNA(Met) + L-methionine + ATP = L-methionyl-tRNA(Met) + AMP + diphosphate. In terms of biological role, is required not only for elongation of protein synthesis but also for the initiation of all mRNA translation through initiator tRNA(fMet) aminoacylation. The protein is Methionine--tRNA ligase of Rhizobium meliloti (strain 1021) (Ensifer meliloti).